The primary structure comprises 313 residues: 4-hydroxy-3-methylbut-2-enyl diphosphate reductase (313 aa).

C13 serves as a coordination point for [4Fe-4S] cluster. The (2E)-4-hydroxy-3-methylbut-2-enyl diphosphate site is built by H41 and H75. The dimethylallyl diphosphate site is built by H41 and H75. Residues H41 and H75 each contribute to the isopentenyl diphosphate site. C97 contributes to the [4Fe-4S] cluster binding site. A (2E)-4-hydroxy-3-methylbut-2-enyl diphosphate-binding site is contributed by H125. A dimethylallyl diphosphate-binding site is contributed by H125. H125 contacts isopentenyl diphosphate. Residue E127 is the Proton donor of the active site. A (2E)-4-hydroxy-3-methylbut-2-enyl diphosphate-binding site is contributed by T168. C218 is a [4Fe-4S] cluster binding site. (2E)-4-hydroxy-3-methylbut-2-enyl diphosphate contacts are provided by S246, S247, N248, and S295. Dimethylallyl diphosphate is bound by residues S246, S247, N248, and S295. Positions 246, 247, 248, and 295 each coordinate isopentenyl diphosphate.

It belongs to the IspH family. Requires [4Fe-4S] cluster as cofactor.

It catalyses the reaction isopentenyl diphosphate + 2 oxidized [2Fe-2S]-[ferredoxin] + H2O = (2E)-4-hydroxy-3-methylbut-2-enyl diphosphate + 2 reduced [2Fe-2S]-[ferredoxin] + 2 H(+). The catalysed reaction is dimethylallyl diphosphate + 2 oxidized [2Fe-2S]-[ferredoxin] + H2O = (2E)-4-hydroxy-3-methylbut-2-enyl diphosphate + 2 reduced [2Fe-2S]-[ferredoxin] + 2 H(+). It functions in the pathway isoprenoid biosynthesis; dimethylallyl diphosphate biosynthesis; dimethylallyl diphosphate from (2E)-4-hydroxy-3-methylbutenyl diphosphate: step 1/1. It participates in isoprenoid biosynthesis; isopentenyl diphosphate biosynthesis via DXP pathway; isopentenyl diphosphate from 1-deoxy-D-xylulose 5-phosphate: step 6/6. Catalyzes the conversion of 1-hydroxy-2-methyl-2-(E)-butenyl 4-diphosphate (HMBPP) into a mixture of isopentenyl diphosphate (IPP) and dimethylallyl diphosphate (DMAPP). Acts in the terminal step of the DOXP/MEP pathway for isoprenoid precursor biosynthesis. In Chlorobium phaeovibrioides (strain DSM 265 / 1930) (Prosthecochloris vibrioformis (strain DSM 265)), this protein is 4-hydroxy-3-methylbut-2-enyl diphosphate reductase.